A 20-amino-acid chain; its full sequence is Fibrinogen (20 aa).

Residues 1 to 20 (LHSNLEYQYRYSGRVASGIP) form the Vitellogenin domain.

In terms of tissue distribution, secreted into the hemolymph.

The protein localises to the secreted. The protein resides in the extracellular space. Involved in lipid transport. Plays a role in hemolymph clotting. May be involved in wound healing in the cuticle. This is Fibrinogen from Pacifastacus leniusculus (Signal crayfish).